Reading from the N-terminus, the 84-residue chain is RNA-binding protein Hfq (84 aa).

Positions 10–69 constitute a Sm domain; sequence DPFLNILRKERIPVSIYLVNGIKLQGQIDSFDQYVVLLKNSVTQMVYKHAISTIVPAKAI.

Belongs to the Hfq family. Homohexamer.

In terms of biological role, RNA chaperone that binds small regulatory RNA (sRNAs) and mRNAs to facilitate mRNA translational regulation in response to envelope stress, environmental stress and changes in metabolite concentrations. Also binds with high specificity to tRNAs. This chain is RNA-binding protein Hfq, found in Nitrosomonas europaea (strain ATCC 19718 / CIP 103999 / KCTC 2705 / NBRC 14298).